The chain runs to 132 residues: Small ribosomal subunit protein uS8c (132 aa).

Belongs to the universal ribosomal protein uS8 family. As to quaternary structure, part of the 30S ribosomal subunit.

The protein resides in the plastid. It is found in the chloroplast. One of the primary rRNA binding proteins, it binds directly to 16S rRNA central domain where it helps coordinate assembly of the platform of the 30S subunit. In Anthoceros angustus (Hornwort), this protein is Small ribosomal subunit protein uS8c (rps8).